We begin with the raw amino-acid sequence, 840 residues long: V-type proton ATPase 116 kDa subunit a 4 (840 aa).

Over 1-390 the chain is Cytoplasmic; that stretch reads MVSVFRSEEM…DAYGVGSYRE (390 aa). A helical transmembrane segment spans residues 391–409; that stretch reads INPAPYTIITFPFLFAVMF. Residues 410–411 are Vacuolar-facing; the sequence is GD. A helical membrane pass occupies residues 412–428; the sequence is CGHGTVMLLAALWMILN. At 429–443 the chain is on the cytoplasmic side; the sequence is ERRLLSQKTDNEIWN. Residues 444–473 form a helical membrane-spanning segment; it reads TFFHGRYLILLMGIFSIYTGLIYNDCFSKS. The Vacuolar segment spans residues 474 to 538; sequence LNIFGSSWSV…ASNKLTFLNS (65 aa). The chain crosses the membrane as a helical span at residues 539–558; sequence YKMKMSVILGIVQMVFGVIL. The Cytoplasmic segment spans residues 559–576; that stretch reads SLFNHIYFRRTLNIILQF. Residues 577–597 form a helical membrane-spanning segment; it reads IPEMIFILCLFGYLVFMIIFK. Topologically, residues 598–642 are vacuolar; the sequence is WCCFDVHVSQHAPSILIHFINMFLFNYSDSSNAPLYKHQQEVQSF. Residues 643–662 traverse the membrane as a helical segment; sequence FVVMALISVPWMLLIKPFIL. Topologically, residues 663–727 are cytoplasmic; sequence RASHRKSQLQ…DVFVHQAIHT (65 aa). The segment at 675–704 is disordered; that stretch reads RIQEDATENIEGDSSSPSSRSGQRTSADTH. Residues 728-752 traverse the membrane as a helical segment; it reads IEYCLGCISNTASYLRLWALSLAHA. At 753-773 the chain is on the vacuolar side; the sequence is QLSEVLWTMVMNSGLQTRGWG. A helical transmembrane segment spans residues 774–812; the sequence is GIVGVFIIFAVFAVLTVAILLIMEGLSAFLHALRLHWVE. The Cytoplasmic segment spans residues 813–840; the sequence is FQNKFYVGDGYKFSPFSFKHILDGTAEE.

It belongs to the V-ATPase 116 kDa subunit family. In terms of assembly, V-ATPase is a heteromultimeric enzyme made up of two complexes: the ATP-hydrolytic V1 complex and the proton translocation V0 complex. The V1 complex consists of three catalytic AB heterodimers that form a heterohexamer, three peripheral stalks each consisting of EG heterodimers, one central rotor including subunits D and F, and the regulatory subunits C and H. The proton translocation complex V0 consists of the proton transport subunit a, a ring of proteolipid subunits c9c'', rotary subunit d, subunits e and f, and the accessory subunits ATP6AP1/Ac45 and ATP6AP2/PRR. Interacts with the V1 complex V-ATPase subunit A ATP6V1A. Interacts with the V0 complex V-ATPase subunit c ATP6V0C. In terms of tissue distribution, expressed in adult and fetal kidney. Found in the inner ear.

It localises to the apical cell membrane. The protein localises to the basolateral cell membrane. Subunit of the V0 complex of vacuolar(H+)-ATPase (V-ATPase), a multisubunit enzyme composed of a peripheral complex (V1) that hydrolyzes ATP and a membrane integral complex (V0) that translocates protons. V-ATPase is responsible for acidifying and maintaining the pH of intracellular compartments and in some cell types, is targeted to the plasma membrane, where it is responsible for acidifying the extracellular environment. Involved in normal vectorial acid transport into the urine by the kidney. The polypeptide is V-type proton ATPase 116 kDa subunit a 4 (ATP6V0A4) (Homo sapiens (Human)).